The chain runs to 882 residues: Alanine--tRNA ligase (882 aa).

Residues histidine 570, histidine 574, cysteine 672, and histidine 676 each coordinate Zn(2+).

It belongs to the class-II aminoacyl-tRNA synthetase family. Zn(2+) is required as a cofactor.

It is found in the cytoplasm. The enzyme catalyses tRNA(Ala) + L-alanine + ATP = L-alanyl-tRNA(Ala) + AMP + diphosphate. Catalyzes the attachment of alanine to tRNA(Ala) in a two-step reaction: alanine is first activated by ATP to form Ala-AMP and then transferred to the acceptor end of tRNA(Ala). Also edits incorrectly charged Ser-tRNA(Ala) and Gly-tRNA(Ala) via its editing domain. This Xanthomonas campestris pv. campestris (strain ATCC 33913 / DSM 3586 / NCPPB 528 / LMG 568 / P 25) protein is Alanine--tRNA ligase.